A 166-amino-acid polypeptide reads, in one-letter code: NAD(P)H-quinone oxidoreductase subunit I, chloroplastic (166 aa).

4Fe-4S ferredoxin-type domains lie at 55 to 84 and 95 to 124; these read GRIHFEFDKCIACEVCVRVCPIDLPVVDWK and LNYSIDFGICIFCGNCVEYCPTNCLSMTEE. [4Fe-4S] cluster is bound by residues cysteine 64, cysteine 67, cysteine 70, cysteine 74, cysteine 104, cysteine 107, cysteine 110, and cysteine 114.

Belongs to the complex I 23 kDa subunit family. NDH is composed of at least 16 different subunits, 5 of which are encoded in the nucleus. [4Fe-4S] cluster is required as a cofactor.

Its subcellular location is the plastid. The protein resides in the chloroplast thylakoid membrane. The enzyme catalyses a plastoquinone + NADH + (n+1) H(+)(in) = a plastoquinol + NAD(+) + n H(+)(out). It catalyses the reaction a plastoquinone + NADPH + (n+1) H(+)(in) = a plastoquinol + NADP(+) + n H(+)(out). Functionally, NDH shuttles electrons from NAD(P)H:plastoquinone, via FMN and iron-sulfur (Fe-S) centers, to quinones in the photosynthetic chain and possibly in a chloroplast respiratory chain. The immediate electron acceptor for the enzyme in this species is believed to be plastoquinone. Couples the redox reaction to proton translocation, and thus conserves the redox energy in a proton gradient. The protein is NAD(P)H-quinone oxidoreductase subunit I, chloroplastic of Lactuca sativa (Garden lettuce).